The chain runs to 432 residues: Trigger factor (432 aa).

The 86-residue stretch at 161–246 (EDRVTIDFTG…LKKVEERELP (86 aa)) folds into the PPIase FKBP-type domain.

This sequence belongs to the FKBP-type PPIase family. Tig subfamily.

It localises to the cytoplasm. It carries out the reaction [protein]-peptidylproline (omega=180) = [protein]-peptidylproline (omega=0). Involved in protein export. Acts as a chaperone by maintaining the newly synthesized protein in an open conformation. Functions as a peptidyl-prolyl cis-trans isomerase. The protein is Trigger factor of Klebsiella pneumoniae subsp. pneumoniae (strain ATCC 700721 / MGH 78578).